A 676-amino-acid polypeptide reads, in one-letter code: Pentatricopeptide repeat-containing protein ATP4 homolog, chloroplastic (676 aa).

A chloroplast-targeting transit peptide spans 1 to 73 (MASPSSLLSW…NSPRAAGLAR (73 aa)). Positions 17 to 58 (LSFQPKNPSPSPATARVSVQDPPPPPSDANPSPGRSSNTSRY) are disordered. PPR repeat units lie at residues 148–182 (EVIL…GVQP), 183–217 (DNAT…GCSP), 218–252 (DMLT…KWQL), 253–287 (DPVI…GVKP), 288–322 (NLVV…EAVP), 323–353 (NKAT…MKDE), 358–388 (DVVL…MKAS), 396–430 (DSWS…GFKP), 431–465 (NIFI…GITP), and 532–566 (RMPY…GIYS). One can recognise a Smr domain in the interval 578–662 (LHLRGLSVGA…WFLTTSVAAR (85 aa)).

The protein belongs to the PPR family. P subfamily.

It is found in the plastid. The protein localises to the chloroplast. In terms of biological role, involved in translation and accumulation of chloroplast ATP synthase subunits. This chain is Pentatricopeptide repeat-containing protein ATP4 homolog, chloroplastic, found in Oryza sativa subsp. japonica (Rice).